The following is a 199-amino-acid chain: dITP/XTP pyrophosphatase (199 aa).

7-12 (TSNRGK) contacts substrate. Aspartate 74 acts as the Proton acceptor in catalysis. Aspartate 74 contributes to the Mg(2+) binding site. Residues serine 75, 156–159 (FGYD), lysine 179, and 184–185 (HR) contribute to the substrate site.

It belongs to the HAM1 NTPase family. As to quaternary structure, homodimer. It depends on Mg(2+) as a cofactor.

The catalysed reaction is XTP + H2O = XMP + diphosphate + H(+). It carries out the reaction dITP + H2O = dIMP + diphosphate + H(+). It catalyses the reaction ITP + H2O = IMP + diphosphate + H(+). In terms of biological role, pyrophosphatase that catalyzes the hydrolysis of nucleoside triphosphates to their monophosphate derivatives, with a high preference for the non-canonical purine nucleotides XTP (xanthosine triphosphate), dITP (deoxyinosine triphosphate) and ITP. Seems to function as a house-cleaning enzyme that removes non-canonical purine nucleotides from the nucleotide pool, thus preventing their incorporation into DNA/RNA and avoiding chromosomal lesions. This Sulfurimonas denitrificans (strain ATCC 33889 / DSM 1251) (Thiomicrospira denitrificans (strain ATCC 33889 / DSM 1251)) protein is dITP/XTP pyrophosphatase.